A 64-amino-acid polypeptide reads, in one-letter code: Protein YnhH (64 aa).

In Escherichia coli (strain K12), this protein is Protein YnhH.